Reading from the N-terminus, the 305-residue chain is Methionyl-tRNA formyltransferase (305 aa).

110-113 (SLLP) contributes to the (6S)-5,6,7,8-tetrahydrofolate binding site.

The protein belongs to the Fmt family.

It catalyses the reaction L-methionyl-tRNA(fMet) + (6R)-10-formyltetrahydrofolate = N-formyl-L-methionyl-tRNA(fMet) + (6S)-5,6,7,8-tetrahydrofolate + H(+). Its function is as follows. Attaches a formyl group to the free amino group of methionyl-tRNA(fMet). The formyl group appears to play a dual role in the initiator identity of N-formylmethionyl-tRNA by promoting its recognition by IF2 and preventing the misappropriation of this tRNA by the elongation apparatus. The sequence is that of Methionyl-tRNA formyltransferase from Ureaplasma urealyticum serovar 10 (strain ATCC 33699 / Western).